A 103-amino-acid chain; its full sequence is Large ribosomal subunit protein bL21 (103 aa).

The protein belongs to the bacterial ribosomal protein bL21 family. In terms of assembly, part of the 50S ribosomal subunit. Contacts protein L20.

This protein binds to 23S rRNA in the presence of protein L20. The chain is Large ribosomal subunit protein bL21 from Shigella sonnei (strain Ss046).